Reading from the N-terminus, the 343-residue chain is GTPase Obg (343 aa).

Residues 1 to 159 (MKFLDQAKIY…RWVWLRLKLI (159 aa)) form the Obg domain. One can recognise an OBG-type G domain in the interval 160–328 (ADAGLVGLPN…LLRQVMTYVA (169 aa)). GTP-binding positions include 166 to 173 (GLPNAGKS), 191 to 195 (FTTLH), 213 to 216 (DIPG), 280 to 283 (NKCD), and 309 to 311 (SGV). Mg(2+) is bound by residues Ser173 and Thr193.

It belongs to the TRAFAC class OBG-HflX-like GTPase superfamily. OBG GTPase family. Monomer. Requires Mg(2+) as cofactor.

It localises to the cytoplasm. Its function is as follows. An essential GTPase which binds GTP, GDP and possibly (p)ppGpp with moderate affinity, with high nucleotide exchange rates and a fairly low GTP hydrolysis rate. Plays a role in control of the cell cycle, stress response, ribosome biogenesis and in those bacteria that undergo differentiation, in morphogenesis control. In Granulibacter bethesdensis (strain ATCC BAA-1260 / CGDNIH1), this protein is GTPase Obg.